Consider the following 255-residue polypeptide: MNINKIALIYNKDYKSLAIIEEIKKLYNYCEVEEAEVIIVIGGDGALLHNIHCYMHLNIPFYGVNLGSLGFLMNTLDTKNLLQNIHDSTVTILNPLLMQAKDTSGQIYTALAINEVSIFRKTNQAAKFRIDVNGIERMSELVADGALVATPAGSSAYNLSAGGPILPLESNMLCLTPICAFRPRRWHGALLLSSATIKFEIFNTTKRPVNATADFQEFNNIIQVTVSSTKDKPIKLLFNKNHTLEDRIIKEQFGG.

Aspartate 44 acts as the Proton acceptor in catalysis. Residues 44–45 (DG), histidine 49, 114–115 (NE), aspartate 144, alanine 152, 155–160 (SAYNLS), and glutamine 216 each bind NAD(+).

It belongs to the NAD kinase family. A divalent metal cation serves as cofactor.

It is found in the cytoplasm. The catalysed reaction is NAD(+) + ATP = ADP + NADP(+) + H(+). Involved in the regulation of the intracellular balance of NAD and NADP, and is a key enzyme in the biosynthesis of NADP. Catalyzes specifically the phosphorylation on 2'-hydroxyl of the adenosine moiety of NAD to yield NADP. In Rickettsia canadensis (strain McKiel), this protein is NAD kinase.